Here is an 814-residue protein sequence, read N- to C-terminus: Acyl-coenzyme A dehydrogenase (814 aa).

Glu-497 functions as the Proton acceptor in the catalytic mechanism.

Belongs to the acyl-CoA dehydrogenase family. Requires FAD as cofactor.

It catalyses the reaction a medium-chain 2,3-saturated fatty acyl-CoA + oxidized [electron-transfer flavoprotein] + H(+) = a medium-chain (2E)-enoyl-CoA + reduced [electron-transfer flavoprotein]. It carries out the reaction a long-chain 2,3-saturated fatty acyl-CoA + oxidized [electron-transfer flavoprotein] + H(+) = a long-chain (2E)-enoyl-CoA + reduced [electron-transfer flavoprotein]. Its pathway is lipid metabolism; fatty acid beta-oxidation. In terms of biological role, catalyzes the dehydrogenation of acyl-coenzymes A (acyl-CoAs) to 2-enoyl-CoAs, the first step of the beta-oxidation cycle of fatty acid degradation. Is required for the utilization of medium- and long-chain fatty acids as sole carbon sources for growth. The sequence is that of Acyl-coenzyme A dehydrogenase (fadE) from Escherichia coli O157:H7.